Consider the following 245-residue polypeptide: Keratin-associated protein 10-12 (245 aa).

19 tandem repeats follow at residues 36–40 (CCEPP), 41–45 (CCAPA), 62–66 (CCRVT), 84–88 (CCQQS), 94–98 (CCTSS), 104–108 (CCVPV), 109–113 (CCKTV), 114–118 (CCKPV), 119–123 (CCMPV), 124–128 (CCGPS), 131–135 (CCQQS), 141–145 (CCISS), 151–155 (CCVPV), 156–160 (CCKPI), 161–165 (CCVPV), 173–177 (CCQQS), 183–187 (CCTTS), 188–192 (CCRPS), and 214–218 (CCVPT). The 19 X 5 AA repeats of C-C-X(3) stretch occupies residues 36–218 (CCEPPCCAPA…VPVPSCCVPT (183 aa)).

This sequence belongs to the KRTAP type 10 family. In terms of assembly, interacts with hair keratins. Restricted to a narrow region of the hair fiber cuticle, lying approximately 20 cell layers above the apex of the dermal papilla of the hair root; not detected in any other tissues.

Its function is as follows. In the hair cortex, hair keratin intermediate filaments are embedded in an interfilamentous matrix, consisting of hair keratin-associated proteins (KRTAP), which are essential for the formation of a rigid and resistant hair shaft through their extensive disulfide bond cross-linking with abundant cysteine residues of hair keratins. The matrix proteins include the high-sulfur and high-glycine-tyrosine keratins. The chain is Keratin-associated protein 10-12 (KRTAP10-12) from Homo sapiens (Human).